We begin with the raw amino-acid sequence, 247 residues long: Capsid protein (247 aa).

Positions 1 to 40 are DNA-binding; the sequence is MWGTSNCACAKFQIRRRYARPYRRRHIRRYRRRRRHFRRR. Residues 15–44 are nuclear localization signals; sequence RRRYARPYRRRHIRRYRRRRRHFRRRRFTT.

Belongs to the circoviridae capsid protein family. As to quaternary structure, homomultimer. Assembles in the nucleus, presumably in an immature form, then migrates to the cytoplasm once assembled as mature virion. Interacts with Rep; this interaction relocates Rep into the nucleus.

The protein resides in the host nucleus. The protein localises to the virion. In terms of biological role, self-assembles to form the virion icosahedral capsid with a T=1 symmetry. This very small capsid (17 - 22 nm in diameter) allows the virus to be very stable in the environment and resistant to some disinfectants, including detergents. Essential for the initial attachment to heparan sulfate moieties and chondroitin sulfate B of the host cell surface proteoglycans. After attachment, the virus is endocytosed and traffics to the nucleus. The capsid protein binds and transports the viral genome and Rep across the nuclear envelope. This chain is Capsid protein (Cap), found in Beak and feather disease virus (BFDV).